We begin with the raw amino-acid sequence, 357 residues long: uncharacterized protein (357 aa).

This is an uncharacterized protein from Caenorhabditis elegans.